A 520-amino-acid polypeptide reads, in one-letter code: Probable E3 ubiquitin-protein ligase XBOS33 (520 aa).

ANK repeat units follow at residues G44–V73, C77–R106, S111–P140, G185–A214, and A228–L258. An RING-type zinc finger spans residues C327–R377. Residues Q467–H479 are compositionally biased toward polar residues. The segment at Q467–L493 is disordered. A compositionally biased stretch (basic and acidic residues) spans E484–L493.

It carries out the reaction S-ubiquitinyl-[E2 ubiquitin-conjugating enzyme]-L-cysteine + [acceptor protein]-L-lysine = [E2 ubiquitin-conjugating enzyme]-L-cysteine + N(6)-ubiquitinyl-[acceptor protein]-L-lysine.. It participates in protein modification; protein ubiquitination. The protein is Probable E3 ubiquitin-protein ligase XBOS33 (XBOS33) of Oryza sativa subsp. japonica (Rice).